A 65-amino-acid chain; its full sequence is Large ribosomal subunit protein bL35 (65 aa).

The interval 1–25 (MPKMKSHRGAAKRFKKTGTGKLKRA) is disordered.

The protein belongs to the bacterial ribosomal protein bL35 family.

The chain is Large ribosomal subunit protein bL35 from Clostridium botulinum (strain Alaska E43 / Type E3).